Reading from the N-terminus, the 346-residue chain is Carbamoyl phosphate synthase small chain (346 aa).

A CPSase region spans residues 1-160 (MEDGSVFAGR…SVKEPVLLGE (160 aa)). L-glutamine is bound by residues serine 39, glycine 209, and glycine 211. A Glutamine amidotransferase type-1 domain is found at 164–346 (CIGVVDCGVK…FLKLVERHGH (183 aa)). The active-site Nucleophile is the cysteine 237. L-glutamine is bound by residues leucine 238, glutamine 241, asparagine 280, glycine 282, and tyrosine 283. Active-site residues include histidine 320 and glutamate 322.

Belongs to the CarA family. In terms of assembly, composed of two chains; the small (or glutamine) chain promotes the hydrolysis of glutamine to ammonia, which is used by the large (or ammonia) chain to synthesize carbamoyl phosphate. Tetramer of heterodimers (alpha,beta)4.

The enzyme catalyses hydrogencarbonate + L-glutamine + 2 ATP + H2O = carbamoyl phosphate + L-glutamate + 2 ADP + phosphate + 2 H(+). It catalyses the reaction L-glutamine + H2O = L-glutamate + NH4(+). It participates in amino-acid biosynthesis; L-arginine biosynthesis; carbamoyl phosphate from bicarbonate: step 1/1. It functions in the pathway pyrimidine metabolism; UMP biosynthesis via de novo pathway; (S)-dihydroorotate from bicarbonate: step 1/3. Its function is as follows. Small subunit of the glutamine-dependent carbamoyl phosphate synthetase (CPSase). CPSase catalyzes the formation of carbamoyl phosphate from the ammonia moiety of glutamine, carbonate, and phosphate donated by ATP, constituting the first step of 2 biosynthetic pathways, one leading to arginine and/or urea and the other to pyrimidine nucleotides. The small subunit (glutamine amidotransferase) binds and cleaves glutamine to supply the large subunit with the substrate ammonia. The protein is Carbamoyl phosphate synthase small chain of Pyrobaculum aerophilum (strain ATCC 51768 / DSM 7523 / JCM 9630 / CIP 104966 / NBRC 100827 / IM2).